The primary structure comprises 2185 residues: DNA polymerase epsilon catalytic subunit A (2185 aa).

The Zn(2+) site is built by C2072, C2075, C2094, and C2097. The CysA-type zinc-finger motif lies at 2072–2097 (CEHCSYISDIDICRESMERVFICQSC). [4Fe-4S] cluster is bound by residues C2128, C2131, C2143, and C2145. The short motif at 2128–2145 (CNKCHKIKEDAMSPYCPC) is the CysB motif element.

It belongs to the DNA polymerase type-B family. Heterotetramer. Consists of 4 subunits: POL2, DPB2, DPB3 and DPB4. Requires [4Fe-4S] cluster as cofactor.

It localises to the nucleus. The catalysed reaction is DNA(n) + a 2'-deoxyribonucleoside 5'-triphosphate = DNA(n+1) + diphosphate. Functionally, DNA polymerase II participates in chromosomal DNA replication. This chain is DNA polymerase epsilon catalytic subunit A (POL2), found in Kluyveromyces lactis (strain ATCC 8585 / CBS 2359 / DSM 70799 / NBRC 1267 / NRRL Y-1140 / WM37) (Yeast).